A 544-amino-acid chain; its full sequence is Chaperonin GroEL 2 (544 aa).

Residues 29–32, Lys50, 86–90, Gly414, and Asp494 contribute to the ATP site; these read TLGP and DGTTT.

It belongs to the chaperonin (HSP60) family. In terms of assembly, forms a cylinder of 14 subunits composed of two heptameric rings stacked back-to-back. Interacts with the co-chaperonin GroES.

The protein resides in the cytoplasm. It carries out the reaction ATP + H2O + a folded polypeptide = ADP + phosphate + an unfolded polypeptide.. In terms of biological role, together with its co-chaperonin GroES, plays an essential role in assisting protein folding. The GroEL-GroES system forms a nano-cage that allows encapsulation of the non-native substrate proteins and provides a physical environment optimized to promote and accelerate protein folding. The polypeptide is Chaperonin GroEL 2 (Psychromonas ingrahamii (strain DSM 17664 / CCUG 51855 / 37)).